Reading from the N-terminus, the 264-residue chain is Type III pantothenate kinase (264 aa).

Residue 6–13 (DSGNSRLK) participates in ATP binding. Substrate is bound by residues tyrosine 92 and 99–102 (GADR). Aspartate 101 serves as the catalytic Proton acceptor. Residue threonine 127 participates in ATP binding. Residue threonine 177 participates in substrate binding.

It belongs to the type III pantothenate kinase family. Homodimer. The cofactor is NH4(+). It depends on K(+) as a cofactor.

The protein localises to the cytoplasm. It catalyses the reaction (R)-pantothenate + ATP = (R)-4'-phosphopantothenate + ADP + H(+). It functions in the pathway cofactor biosynthesis; coenzyme A biosynthesis; CoA from (R)-pantothenate: step 1/5. Functionally, catalyzes the phosphorylation of pantothenate (Pan), the first step in CoA biosynthesis. The protein is Type III pantothenate kinase of Bordetella petrii (strain ATCC BAA-461 / DSM 12804 / CCUG 43448).